The following is a 61-amino-acid chain: Sperm protamine P1 (61 aa).

Residues 1–61 (MARFRRSRSR…RSSRRSRRRN (61 aa)) are disordered.

It belongs to the protamine P1 family. As to expression, testis.

Its subcellular location is the nucleus. The protein resides in the chromosome. Functionally, protamines substitute for histones in the chromatin of sperm during the haploid phase of spermatogenesis. They compact sperm DNA into a highly condensed, stable and inactive complex. In Ornithorhynchus anatinus (Duckbill platypus), this protein is Sperm protamine P1 (PRM1).